We begin with the raw amino-acid sequence, 323 residues long: Forkhead transcription factor fkh-6 (323 aa).

Residues 21–122 (KPPYSYVALI…DNGNFKRRRV (102 aa)) constitute a DNA-binding region (fork-head).

The protein resides in the nucleus. Functionally, probable transcription factor. Binds to the DNA sequence motif 5'-[TA]TGTT[TG]T[TG][ATG]TT-3'. Regulates sexual dimorphism in the gonad, promoting male gonadal cell fates in chromosomally (XO) male animals, yet plays a role in gonadogenesis in both sexes; probably acts downstream of terminal regulator of sex determination tra-1, to control early gonadogenesis. Positively modulates expression of homeobox protein egl-5, probably acting indirectly, during early gonadal development. In Caenorhabditis elegans, this protein is Forkhead transcription factor fkh-6.